The sequence spans 58 residues: uncharacterized protein (58 aa).

2 disordered regions span residues 1–20 (MKKNRHSRDMQNHKKPMNKK) and 38–58 (IIETLEVTKPEKKKEKNKKQQ).

This is an uncharacterized protein from Bacillus subtilis (strain 168).